The sequence spans 310 residues: Oxygen-dependent coproporphyrinogen-III oxidase (310 aa).

Serine 97 contacts substrate. Positions 101 and 111 each coordinate a divalent metal cation. Catalysis depends on histidine 111, which acts as the Proton donor. 113–115 (NFR) contributes to the substrate binding site. A divalent metal cation is bound by residues histidine 150 and histidine 180. Residues 245-280 (YVEFNLLYDRGTRFGLEFGGRTESILMSLPPRVVWR) are important for dimerization. 263 to 265 (GGR) contacts substrate.

Belongs to the aerobic coproporphyrinogen-III oxidase family. In terms of assembly, homodimer. Requires a divalent metal cation as cofactor.

The protein resides in the cytoplasm. The catalysed reaction is coproporphyrinogen III + O2 + 2 H(+) = protoporphyrinogen IX + 2 CO2 + 2 H2O. It participates in porphyrin-containing compound metabolism; protoporphyrin-IX biosynthesis; protoporphyrinogen-IX from coproporphyrinogen-III (O2 route): step 1/1. Functionally, involved in the heme biosynthesis. Catalyzes the aerobic oxidative decarboxylation of propionate groups of rings A and B of coproporphyrinogen-III to yield the vinyl groups in protoporphyrinogen-IX. The protein is Oxygen-dependent coproporphyrinogen-III oxidase of Coxiella burnetii (strain Dugway 5J108-111).